The following is a 338-amino-acid chain: Aspartate-semialdehyde dehydrogenase (338 aa).

NADP(+) is bound by residues 13 to 16 and 41 to 42; these read TGNV and NS. Arginine 101 contributes to the phosphate binding site. Cysteine 132 acts as the Acyl-thioester intermediate in catalysis. A substrate-binding site is contributed by glutamine 159. NADP(+) is bound by residues 162–163 and proline 187; that span reads SG. Residue lysine 216 coordinates phosphate. Position 237 (arginine 237) interacts with substrate. Histidine 244 acts as the Proton acceptor in catalysis. Asparagine 317 contributes to the NADP(+) binding site.

This sequence belongs to the aspartate-semialdehyde dehydrogenase family. In terms of assembly, homodimer.

The enzyme catalyses L-aspartate 4-semialdehyde + phosphate + NADP(+) = 4-phospho-L-aspartate + NADPH + H(+). The protein operates within amino-acid biosynthesis; L-lysine biosynthesis via DAP pathway; (S)-tetrahydrodipicolinate from L-aspartate: step 2/4. Its pathway is amino-acid biosynthesis; L-methionine biosynthesis via de novo pathway; L-homoserine from L-aspartate: step 2/3. It functions in the pathway amino-acid biosynthesis; L-threonine biosynthesis; L-threonine from L-aspartate: step 2/5. Its function is as follows. Catalyzes the NADPH-dependent formation of L-aspartate-semialdehyde (L-ASA) by the reductive dephosphorylation of L-aspartyl-4-phosphate. This chain is Aspartate-semialdehyde dehydrogenase, found in Rickettsia typhi (strain ATCC VR-144 / Wilmington).